A 578-amino-acid polypeptide reads, in one-letter code: Arginine--tRNA ligase (578 aa).

The 'HIGH' region motif lies at 127-137 (PNLAKEMHVGH).

This sequence belongs to the class-I aminoacyl-tRNA synthetase family. In terms of assembly, monomer.

It localises to the cytoplasm. The enzyme catalyses tRNA(Arg) + L-arginine + ATP = L-arginyl-tRNA(Arg) + AMP + diphosphate. The polypeptide is Arginine--tRNA ligase (Pseudomonas fluorescens (strain ATCC BAA-477 / NRRL B-23932 / Pf-5)).